A 146-amino-acid chain; its full sequence is Sordarin/hypoxysordarin biosynthesis cluster protein G (146 aa).

The protein operates within antibiotic biosynthesis. Its function is as follows. Part of the gene cluster that mediates the biosynthesis of sordarin and hypoxysordarin, glycoside antibiotics with a unique tetracyclic diterpene aglycone structure. First, the geranylgeranyl diphosphate synthase sdnC constructs GGDP from farnesyl diphosphate and isopentenyl diphosphate. The diterpene cyclase sdnA then catalyzes the cyclization of GGDP to afford cycloaraneosene. Cycloaraneosene is then hydroxylated four times by the putative cytochrome P450 monooxygenases sdnB, sdnE, sdnF and sdnH to give a hydroxylated cycloaraneosene derivative such as cycloaraneosene-8,9,13,19-tetraol. Although the order of the hydroxylations is unclear, at least C8, C9 and C13 of the cycloaraneosene skeleton are hydroxylated before the sordaricin formation. Dehydration of the 13-hydroxy group of the hydroxylated cycloaraneosene derivative might be catalyzed by an unassigned hypothetical protein such as sdnG and sdnP to construct the cyclopentadiene moiety. The FAD-dependent oxidoreductase sdnN is proposed to catalyze the oxidation at C9 of the hydroxylated cycloaraneosene derivative and also catalyze the Baeyer-Villiger oxidation to give the lactone intermediate. The presumed lactone intermediate would be hydrolyzed to give an acrolein moiety and a carboxylate moiety. Then, [4+2]cycloaddition would occur between the acrolein moiety and the cyclopentadiene moiety to give sordaricin. SdnN might also be involved in the [4+2]cycloaddition after the hypothesized oxidation to accommodate the oxidized product and prompt the [4+2]cycloaddition. GDP-6-deoxy-D-altrose may be biosynthesized from GDP-D-mannose by the putative GDP-mannose-4,6-dehydratase sdnI and the short-chain dehydrogenase sdnK. The glycosyltransferase sdnJ catalyzes the attachment of 6-deoxy-D-altrose onto the 19-hydroxy group of sordaricin to give 4'-O-demethylsordarin. The methyltransferase sdnD would complete the biosynthesis of sordarin. Sordarin can be further modified into hypoxysordarin. The unique acyl chain at the 3'-hydroxy group of hypoxysordarin would be constructed by an iterative type I PKS sdnO and the trans-acting polyketide methyltransferase sdnL. SdnL would be responsible for the introduction of an alpha-methyl group of the polyketide chain. Alternatively, the beta-lactamase-like protein sdnR might be responsible for the cleavage and transfer of the polyketide chain from the PKS sdnO to sordarin. Two putative cytochrome P450 monooxygenases, sdnQ and sdnT, might catalyze the epoxidations of the polyketide chain to complete the biosynthesis of hypoxysordarin. Transcriptional regulators sdnM and sdnS are presumably encoded for the transcriptional regulation of the expression of the sdn gene cluster. This is Sordarin/hypoxysordarin biosynthesis cluster protein G from Sordaria araneosa (Pleurage araneosa).